A 449-amino-acid chain; its full sequence is UDP-N-acetylmuramoylalanine--D-glutamate ligase (449 aa).

118–124 (GSNGKTT) lines the ATP pocket.

It belongs to the MurCDEF family.

The protein resides in the cytoplasm. It carries out the reaction UDP-N-acetyl-alpha-D-muramoyl-L-alanine + D-glutamate + ATP = UDP-N-acetyl-alpha-D-muramoyl-L-alanyl-D-glutamate + ADP + phosphate + H(+). It participates in cell wall biogenesis; peptidoglycan biosynthesis. Cell wall formation. Catalyzes the addition of glutamate to the nucleotide precursor UDP-N-acetylmuramoyl-L-alanine (UMA). This is UDP-N-acetylmuramoylalanine--D-glutamate ligase from Oceanobacillus iheyensis (strain DSM 14371 / CIP 107618 / JCM 11309 / KCTC 3954 / HTE831).